A 439-amino-acid chain; its full sequence is Diaminopimelate decarboxylase (439 aa).

Lys-66 carries the N6-(pyridoxal phosphate)lysine modification. Pyridoxal 5'-phosphate-binding positions include Gly-248 and 290–293 (EPGR). Residues Arg-293, Arg-330, and Tyr-334 each contribute to the substrate site. Cys-361 functions as the Proton donor in the catalytic mechanism. 2 residues coordinate substrate: Glu-362 and Tyr-390. Position 390 (Tyr-390) interacts with pyridoxal 5'-phosphate.

The protein belongs to the Orn/Lys/Arg decarboxylase class-II family. LysA subfamily. As to quaternary structure, homodimer. The cofactor is pyridoxal 5'-phosphate.

The enzyme catalyses meso-2,6-diaminopimelate + H(+) = L-lysine + CO2. It participates in amino-acid biosynthesis; L-lysine biosynthesis via DAP pathway; L-lysine from DL-2,6-diaminopimelate: step 1/1. Specifically catalyzes the decarboxylation of meso-diaminopimelate (meso-DAP) to L-lysine. The polypeptide is Diaminopimelate decarboxylase (Bacillus subtilis (strain 168)).